A 495-amino-acid polypeptide reads, in one-letter code: Trimethylamine methyltransferase MttB1 (495 aa).

Position 334 (Pyl-334) is a non-standard amino acid, pyrrolysine.

Belongs to the trimethylamine methyltransferase family. As to quaternary structure, can form a complex with MttC.

The enzyme catalyses Co(I)-[trimethylamine-specific corrinoid protein] + trimethylamine + H(+) = methyl-Co(III)-[trimethylamine-specific corrinoid protein] + dimethylamine. It participates in one-carbon metabolism; methanogenesis from trimethylamine. Its function is as follows. Catalyzes the transfer of a methyl group from trimethylamine to the corrinoid cofactor of MttC. This chain is Trimethylamine methyltransferase MttB1 (mttB1), found in Methanosarcina acetivorans (strain ATCC 35395 / DSM 2834 / JCM 12185 / C2A).